Consider the following 493-residue polypeptide: Probable cytosol aminopeptidase (493 aa).

2 residues coordinate Mn(2+): Lys-259 and Asp-264. The active site involves Lys-271. Residues Asp-282, Asp-341, and Glu-343 each coordinate Mn(2+). Residue Arg-345 is part of the active site.

Belongs to the peptidase M17 family. Requires Mn(2+) as cofactor.

Its subcellular location is the cytoplasm. The enzyme catalyses Release of an N-terminal amino acid, Xaa-|-Yaa-, in which Xaa is preferably Leu, but may be other amino acids including Pro although not Arg or Lys, and Yaa may be Pro. Amino acid amides and methyl esters are also readily hydrolyzed, but rates on arylamides are exceedingly low.. The catalysed reaction is Release of an N-terminal amino acid, preferentially leucine, but not glutamic or aspartic acids.. Its function is as follows. Presumably involved in the processing and regular turnover of intracellular proteins. Catalyzes the removal of unsubstituted N-terminal amino acids from various peptides. The chain is Probable cytosol aminopeptidase from Bacillus cytotoxicus (strain DSM 22905 / CIP 110041 / 391-98 / NVH 391-98).